A 561-amino-acid polypeptide reads, in one-letter code: Urocanate hydratase (561 aa).

NAD(+)-binding positions include 52–53, Q130, 176–178, E196, R201, 242–243, 263–267, 273–274, and Y322; these read GG, GMG, NA, QTSAH, and YL. Residue C410 is part of the active site. G492 lines the NAD(+) pocket.

The protein belongs to the urocanase family. It depends on NAD(+) as a cofactor.

The protein localises to the cytoplasm. It carries out the reaction 4-imidazolone-5-propanoate = trans-urocanate + H2O. It functions in the pathway amino-acid degradation; L-histidine degradation into L-glutamate; N-formimidoyl-L-glutamate from L-histidine: step 2/3. Catalyzes the conversion of urocanate to 4-imidazolone-5-propionate. This Citrobacter koseri (strain ATCC BAA-895 / CDC 4225-83 / SGSC4696) protein is Urocanate hydratase.